Consider the following 324-residue polypeptide: tRNA dimethylallyltransferase (324 aa).

17–24 contacts ATP; the sequence is GPTASGKT. 19 to 24 provides a ligand contact to substrate; that stretch reads TASGKT. 3 interaction with substrate tRNA regions span residues 42-45, 166-170, and 251-256; these read DSAL, QRIQR, and RCVGYR.

Belongs to the IPP transferase family. In terms of assembly, monomer. Mg(2+) is required as a cofactor.

It catalyses the reaction adenosine(37) in tRNA + dimethylallyl diphosphate = N(6)-dimethylallyladenosine(37) in tRNA + diphosphate. Catalyzes the transfer of a dimethylallyl group onto the adenine at position 37 in tRNAs that read codons beginning with uridine, leading to the formation of N6-(dimethylallyl)adenosine (i(6)A). This is tRNA dimethylallyltransferase from Burkholderia pseudomallei (strain 1106a).